Consider the following 123-residue polypeptide: Small ribosomal subunit protein uS12 (123 aa).

The segment at 1 to 28 is disordered; that stretch reads MPTIQQLIRKPRQPKVKRSKSQHLEQCP. A compositionally biased stretch (basic residues) spans 9–21; sequence RKPRQPKVKRSKS. D89 is subject to 3-methylthioaspartic acid.

It belongs to the universal ribosomal protein uS12 family. Part of the 30S ribosomal subunit. Contacts proteins S8 and S17. May interact with IF1 in the 30S initiation complex.

With S4 and S5 plays an important role in translational accuracy. Its function is as follows. Interacts with and stabilizes bases of the 16S rRNA that are involved in tRNA selection in the A site and with the mRNA backbone. Located at the interface of the 30S and 50S subunits, it traverses the body of the 30S subunit contacting proteins on the other side and probably holding the rRNA structure together. The combined cluster of proteins S8, S12 and S17 appears to hold together the shoulder and platform of the 30S subunit. This is Small ribosomal subunit protein uS12 from Ruegeria pomeroyi (strain ATCC 700808 / DSM 15171 / DSS-3) (Silicibacter pomeroyi).